A 73-amino-acid chain; its full sequence is Small ribosomal subunit protein bS21 (73 aa).

Belongs to the bacterial ribosomal protein bS21 family.

The protein is Small ribosomal subunit protein bS21 of Parvibaculum lavamentivorans (strain DS-1 / DSM 13023 / NCIMB 13966).